Here is a 77-residue protein sequence, read N- to C-terminus: Putative defensin-like protein 187 (77 aa).

Positions 1-19 (MKNSSIMFVLIVVFLISSS) are cleaved as a signal peptide. Disulfide bonds link Cys31-Cys77, Cys43-Cys71, and Cys47-Cys73.

Belongs to the DEFL family.

It localises to the secreted. The protein is Putative defensin-like protein 187 (LCR42) of Arabidopsis thaliana (Mouse-ear cress).